The chain runs to 501 residues: Oxygen-independent coproporphyrinogen-III oxidase-like protein HemZ (501 aa).

The region spanning 163 to 405 (DLYRVKDEVS…VAWTKEHGYV (243 aa)) is the Radical SAM core domain. Residue Tyr174 participates in S-adenosyl-L-methionine binding. Residues Cys180 and Cys184 each contribute to the [4Fe-4S] cluster site. Residue Tyr186 coordinates S-adenosyl-L-methionine. Residue Cys187 coordinates [4Fe-4S] cluster. S-adenosyl-L-methionine contacts are provided by residues Gly233, 234 to 235 (GT), Glu267, Gln295, Arg307, and Asp332.

The protein belongs to the anaerobic coproporphyrinogen-III oxidase family. HemZ subfamily. [4Fe-4S] cluster is required as a cofactor.

It functions in the pathway porphyrin-containing compound metabolism; protoporphyrin-IX biosynthesis. Involved in the biosynthesis of porphyrin-containing compound. The protein is Oxygen-independent coproporphyrinogen-III oxidase-like protein HemZ (hemZ) of Bacillus subtilis (strain 168).